Consider the following 339-residue polypeptide: GTP 3',8-cyclase (339 aa).

The Radical SAM core domain maps to 13-249; that stretch reads RYGRPLRDLR…GEVAQRHAFA (237 aa). Arg-22 contributes to the GTP binding site. [4Fe-4S] cluster-binding residues include Cys-29 and Cys-33. An S-adenosyl-L-methionine-binding site is contributed by Tyr-35. Cys-36 contributes to the [4Fe-4S] cluster binding site. Arg-75 is a GTP binding site. S-adenosyl-L-methionine is bound at residue Gly-79. Thr-106 serves as a coordination point for GTP. Ser-130 is a binding site for S-adenosyl-L-methionine. Lys-168 is a binding site for GTP. Met-202 contacts S-adenosyl-L-methionine. The [4Fe-4S] cluster site is built by Cys-266 and Cys-269. 271-273 is a binding site for GTP; the sequence is RAR. [4Fe-4S] cluster is bound at residue Cys-283.

This sequence belongs to the radical SAM superfamily. MoaA family. Monomer and homodimer. The cofactor is [4Fe-4S] cluster.

It carries out the reaction GTP + AH2 + S-adenosyl-L-methionine = (8S)-3',8-cyclo-7,8-dihydroguanosine 5'-triphosphate + 5'-deoxyadenosine + L-methionine + A + H(+). It participates in cofactor biosynthesis; molybdopterin biosynthesis. Its function is as follows. Catalyzes the cyclization of GTP to (8S)-3',8-cyclo-7,8-dihydroguanosine 5'-triphosphate. This chain is GTP 3',8-cyclase, found in Xanthomonas campestris pv. campestris (strain B100).